A 179-amino-acid chain; its full sequence is Large ribosomal subunit protein uL5 (179 aa).

Belongs to the universal ribosomal protein uL5 family. In terms of assembly, part of the 50S ribosomal subunit; part of the 5S rRNA/L5/L18/L25 subcomplex. Contacts the 5S rRNA and the P site tRNA. Forms a bridge to the 30S subunit in the 70S ribosome.

Its function is as follows. This is one of the proteins that bind and probably mediate the attachment of the 5S RNA into the large ribosomal subunit, where it forms part of the central protuberance. In the 70S ribosome it contacts protein S13 of the 30S subunit (bridge B1b), connecting the 2 subunits; this bridge is implicated in subunit movement. Contacts the P site tRNA; the 5S rRNA and some of its associated proteins might help stabilize positioning of ribosome-bound tRNAs. This chain is Large ribosomal subunit protein uL5, found in Pseudomonas paraeruginosa (strain DSM 24068 / PA7) (Pseudomonas aeruginosa (strain PA7)).